We begin with the raw amino-acid sequence, 352 residues long: N-acetyl-gamma-glutamyl-phosphate reductase (352 aa).

Cys149 is an active-site residue.

It belongs to the NAGSA dehydrogenase family. Type 1 subfamily.

The protein resides in the cytoplasm. The enzyme catalyses N-acetyl-L-glutamate 5-semialdehyde + phosphate + NADP(+) = N-acetyl-L-glutamyl 5-phosphate + NADPH + H(+). It participates in amino-acid biosynthesis; L-arginine biosynthesis; N(2)-acetyl-L-ornithine from L-glutamate: step 3/4. Its function is as follows. Catalyzes the NADPH-dependent reduction of N-acetyl-5-glutamyl phosphate to yield N-acetyl-L-glutamate 5-semialdehyde. This Polynucleobacter asymbioticus (strain DSM 18221 / CIP 109841 / QLW-P1DMWA-1) (Polynucleobacter necessarius subsp. asymbioticus) protein is N-acetyl-gamma-glutamyl-phosphate reductase.